The primary structure comprises 221 residues: Adenylate kinase (221 aa).

Residue 10-15 (GAGKGT) coordinates ATP. The NMP stretch occupies residues 30 to 59 (STGDIFRQNLRDNTELGKLAKEYMDKGLLV). AMP is bound by residues threonine 31, arginine 36, 57-59 (LLV), 85-88 (GYPR), and glutamine 92. The LID stretch occupies residues 126–163 (GRRVCPVCGATYHIKTSPPKVDNVCDKCGSELIQRSDD). Arginine 127 contacts ATP. Residues cysteine 130 and cysteine 133 each contribute to the Zn(2+) site. Residue 136–137 (TY) coordinates ATP. The Zn(2+) site is built by cysteine 150 and cysteine 153. AMP is bound by residues arginine 160 and arginine 171. ATP is bound at residue lysine 199.

This sequence belongs to the adenylate kinase family. As to quaternary structure, monomer.

It localises to the cytoplasm. The enzyme catalyses AMP + ATP = 2 ADP. Its pathway is purine metabolism; AMP biosynthesis via salvage pathway; AMP from ADP: step 1/1. Its function is as follows. Catalyzes the reversible transfer of the terminal phosphate group between ATP and AMP. Plays an important role in cellular energy homeostasis and in adenine nucleotide metabolism. This chain is Adenylate kinase, found in Caldanaerobacter subterraneus subsp. tengcongensis (strain DSM 15242 / JCM 11007 / NBRC 100824 / MB4) (Thermoanaerobacter tengcongensis).